The sequence spans 324 residues: Viral cathepsin (324 aa).

Positions 1–16 (MNKIVLYLLVYGATLG) are cleaved as a signal peptide. A propeptide spans 17-113 (AAYDLLKAPS…VVLDRPPDKG (97 aa)) (activation peptide). Intrachain disulfides connect cysteine 134-cysteine 175, cysteine 168-cysteine 208, and cysteine 263-cysteine 311. Residue cysteine 137 is part of the active site. Asparagine 159 carries an N-linked (GlcNAc...) asparagine; by host glycan. Catalysis depends on residues histidine 270 and asparagine 290.

Belongs to the peptidase C1 family. Synthesized as an inactive proenzyme and activated by proteolytic removal of the inhibitory propeptide.

The enzyme catalyses Endopeptidase of broad specificity, hydrolyzing substrates of both cathepsin L and cathepsin B.. Functionally, cysteine protease that plays an essential role in host liquefaction to facilitate horizontal transmission of the virus. May participate in the degradation of foreign protein expressed by the baculovirus system. The chain is Viral cathepsin (VCATH) from Antheraea pernyi nuclear polyhedrosis virus (ApNPV).